We begin with the raw amino-acid sequence, 385 residues long: DNA replication and repair protein RecF (385 aa).

30-37 (GANAAGKT) lines the ATP pocket.

Belongs to the RecF family.

It is found in the cytoplasm. Functionally, the RecF protein is involved in DNA metabolism; it is required for DNA replication and normal SOS inducibility. RecF binds preferentially to single-stranded, linear DNA. It also seems to bind ATP. The chain is DNA replication and repair protein RecF from Herpetosiphon aurantiacus (strain ATCC 23779 / DSM 785 / 114-95).